Consider the following 607-residue polypeptide: Tyrosine-protein kinase RYK (607 aa).

The tract at residues 1–20 (MRGAARLGRPGRSCLPGARG) is disordered. Positions 1-25 (MRGAARLGRPGRSCLPGARGLRAPP) are cleaved as a signal peptide. The Extracellular portion of the chain corresponds to 26–227 (PPPLLLLLAL…VHAAPTTSTR (202 aa)). The WIF domain maps to 66 to 194 (LYLSEDEVRR…VLNFKRRKMC (129 aa)). Asn139, Asn174, Asn178, Asn182, and Asn209 each carry an N-linked (GlcNAc...) asparagine glycan. Cys159 and Cys194 form a disulfide bridge. Residues 228–248 (VFYISVGVCCAVIFLVAIILA) form a helical membrane-spanning segment. Topologically, residues 249–607 (VLHLHSMKRI…EFHAALGAYV (359 aa)) are cytoplasmic. Residues 266–282 (ASSSSQGLSQPSTQTTQ) show a composition bias toward low complexity. Residues 266–290 (ASSSSQGLSQPSTQTTQYLRADTPN) are disordered. In terms of domain architecture, Protein kinase spans 330 to 603 (ITLKDVLQEG…QCLTEFHAAL (274 aa)). ATP contacts are provided by residues 336 to 344 (LQEGTFGRI) and Lys364. Asp465 functions as the Proton acceptor in the catalytic mechanism. The residue at position 495 (Tyr495) is a Phosphotyrosine; by autocatalysis.

The protein belongs to the protein kinase superfamily. Tyr protein kinase family. Interacts with DVL1 (via PDZ domain). In terms of processing, proteolytically cleaved, in part by presenilin, in response to WNT3 stimulation. Cleavage occurs during neuronal differentiation. In terms of tissue distribution, observed in all the tissues examined.

Its subcellular location is the membrane. It is found in the nucleus. It localises to the cytoplasm. It carries out the reaction L-tyrosyl-[protein] + ATP = O-phospho-L-tyrosyl-[protein] + ADP + H(+). May be a coreceptor along with FZD8 of Wnt proteins, such as WNT1, WNT3, WNT3A and WNT5A. Involved in neuron differentiation, axon guidance, corpus callosum establishment and neurite outgrowth. In response to WNT3 stimulation, receptor C-terminal cleavage occurs in its transmembrane region and allows the C-terminal intracellular product to translocate from the cytoplasm to the nucleus where it plays a crucial role in neuronal development. This is Tyrosine-protein kinase RYK from Homo sapiens (Human).